A 252-amino-acid polypeptide reads, in one-letter code: Fatty acid elongase 4 (252 aa).

A helical transmembrane segment spans residues Leu25–Met45. A glycan (N-linked (GlcNAc...) asparagine) is linked at Asn56. Residues Val60–Ser80 traverse the membrane as a helical segment. An N-linked (GlcNAc...) asparagine glycan is attached at Asn89. Transmembrane regions (helical) follow at residues Phe100–Leu120, Gln127–Leu147, Gly150–Met170, Phe187–Val207, and Phe214–Leu234. The HxxHH motif motif lies at His132 to His136. Residue His135 is the Nucleophile of the active site.

Belongs to the ELO family.

Its subcellular location is the membrane. It catalyses the reaction (5Z,8Z,11Z,14Z)-eicosatetraenoyl-CoA + malonyl-CoA + H(+) = (7Z,10Z,13Z,16Z)-3-oxodocosatetraenoyl-CoA + CO2 + CoA. The protein operates within lipid metabolism; fatty acid biosynthesis. Involved in the synthesis of fatty acids. Elongates arachidonate and other C20 polyunsaturated fatty acids (PUFAs) with a preference for n-6 PUFAs. Not involved in fatty acid synthesis up to C18. The polypeptide is Fatty acid elongase 4 (Trypanosoma brucei brucei (strain 927/4 GUTat10.1)).